A 630-amino-acid polypeptide reads, in one-letter code: 1-deoxy-D-xylulose-5-phosphate synthase (630 aa).

Thiamine diphosphate contacts are provided by residues H72 and 113–115 (GHS). D144 contacts Mg(2+). Thiamine diphosphate-binding positions include 145–146 (GA), N173, Y284, and E367. N173 contributes to the Mg(2+) binding site.

This sequence belongs to the transketolase family. DXPS subfamily. In terms of assembly, homodimer. The cofactor is Mg(2+). It depends on thiamine diphosphate as a cofactor.

It catalyses the reaction D-glyceraldehyde 3-phosphate + pyruvate + H(+) = 1-deoxy-D-xylulose 5-phosphate + CO2. Its pathway is metabolic intermediate biosynthesis; 1-deoxy-D-xylulose 5-phosphate biosynthesis; 1-deoxy-D-xylulose 5-phosphate from D-glyceraldehyde 3-phosphate and pyruvate: step 1/1. Catalyzes the acyloin condensation reaction between C atoms 2 and 3 of pyruvate and glyceraldehyde 3-phosphate to yield 1-deoxy-D-xylulose-5-phosphate (DXP). This Bacillus cereus (strain G9842) protein is 1-deoxy-D-xylulose-5-phosphate synthase.